Reading from the N-terminus, the 173-residue chain is Small ribosomal subunit protein uS5 (173 aa).

Positions 17–80 constitute an S5 DRBM domain; sequence LREKMIAVNR…EESRRNMIKV (64 aa).

It belongs to the universal ribosomal protein uS5 family. Part of the 30S ribosomal subunit. Contacts proteins S4 and S8.

In terms of biological role, with S4 and S12 plays an important role in translational accuracy. Functionally, located at the back of the 30S subunit body where it stabilizes the conformation of the head with respect to the body. The polypeptide is Small ribosomal subunit protein uS5 (Delftia acidovorans (strain DSM 14801 / SPH-1)).